The sequence spans 95 residues: Ribosome-binding factor A (95 aa).

This sequence belongs to the RbfA family. In terms of assembly, interacts with the 30S ribosomal subunit as a monomer, binding in a position overlapping the sites of the A and P site tRNAs, and displacing segments of the 16S rRNA. Probably contacts 16S rRNA and ribosomal protein S9 and S13.

It is found in the cytoplasm. Functionally, one of several proteins that assist in the late maturation steps of the functional core of the 30S ribosomal subunit. Associates with free 30S ribosomal subunits (but not with 30S subunits that are part of 70S ribosomes or polysomes). Required for efficient processing of 16S rRNA. Probably interacts with the 5'-terminal helix region of 16S rRNA, bringing together different domains of the 30S ribosomal subunit which aids assembly. The chain is Ribosome-binding factor A from Thermus thermophilus (strain ATCC 27634 / DSM 579 / HB8).